The sequence spans 160 residues: Phosphopantetheine adenylyltransferase (160 aa).

A substrate-binding site is contributed by Thr-10. ATP contacts are provided by residues 10-11 (TF) and His-18. Substrate-binding residues include Lys-42, Leu-74, and Arg-88. Residues 89–91 (GLR), Glu-99, and 124–130 (NSFISST) contribute to the ATP site.

The protein belongs to the bacterial CoaD family. As to quaternary structure, homohexamer. It depends on Mg(2+) as a cofactor.

Its subcellular location is the cytoplasm. The catalysed reaction is (R)-4'-phosphopantetheine + ATP + H(+) = 3'-dephospho-CoA + diphosphate. It functions in the pathway cofactor biosynthesis; coenzyme A biosynthesis; CoA from (R)-pantothenate: step 4/5. Its function is as follows. Reversibly transfers an adenylyl group from ATP to 4'-phosphopantetheine, yielding dephospho-CoA (dPCoA) and pyrophosphate. In Aeromonas hydrophila subsp. hydrophila (strain ATCC 7966 / DSM 30187 / BCRC 13018 / CCUG 14551 / JCM 1027 / KCTC 2358 / NCIMB 9240 / NCTC 8049), this protein is Phosphopantetheine adenylyltransferase.